The following is a 446-amino-acid chain: MTDQTATPRSFSASVPLKGRIAIPGDKSISHRSLMLSALAVGESRVAGLLEGHDVLATAAAMRAMGADIARRDDGEWRIHGVGVGGLLQPRGALDMGNSGTSTRLLMGLVASHPITATFVGDASLSGRPMGRVIDPLTQMGADISASPGARGAKTLPLMVRGLAPAIPLSYRLPMASAQVKSAILLAGLNTPGVTEVIEPVPTRDHSERMLGAFGADLTVDIDAGGTRHIRIRGEADLKPQAIIVPGDPSSAAFFIVAALIVPGSDVTIANVGLNPTRAGLVEVLKAMGGDIELLDRREIGGEPVADLRVRHSVLKGIEVDPAVAPSMIDEFPVLFVAATLAEGRTVTTGLDELRVKESDRLAVMATGLKAIGARVEESQDGLVIDGTGGDPLAGGATIAGHLDHRICMSFAIAGLVSKAPVTVDDIAPVATSFPNFEALLAGLQQ.

Lys27, Ser28, and Arg32 together coordinate 3-phosphoshikimate. Residue Lys27 participates in phosphoenolpyruvate binding. Residues Gly100 and Arg128 each contribute to the phosphoenolpyruvate site. Ser177, Gln179, Asp330, and Lys357 together coordinate 3-phosphoshikimate. Phosphoenolpyruvate is bound at residue Gln179. Residue Asp330 is the Proton acceptor of the active site. Positions 361 and 406 each coordinate phosphoenolpyruvate.

Belongs to the EPSP synthase family. Monomer.

The protein resides in the cytoplasm. The catalysed reaction is 3-phosphoshikimate + phosphoenolpyruvate = 5-O-(1-carboxyvinyl)-3-phosphoshikimate + phosphate. It participates in metabolic intermediate biosynthesis; chorismate biosynthesis; chorismate from D-erythrose 4-phosphate and phosphoenolpyruvate: step 6/7. In terms of biological role, catalyzes the transfer of the enolpyruvyl moiety of phosphoenolpyruvate (PEP) to the 5-hydroxyl of shikimate-3-phosphate (S3P) to produce enolpyruvyl shikimate-3-phosphate and inorganic phosphate. In Sphingopyxis alaskensis (strain DSM 13593 / LMG 18877 / RB2256) (Sphingomonas alaskensis), this protein is 3-phosphoshikimate 1-carboxyvinyltransferase.